The chain runs to 103 residues: Small ribosomal subunit protein eS24 (103 aa).

Belongs to the eukaryotic ribosomal protein eS24 family.

This chain is Small ribosomal subunit protein eS24, found in Methanococcus maripaludis (strain C6 / ATCC BAA-1332).